Reading from the N-terminus, the 191-residue chain is Phosphoheptose isomerase (191 aa).

One can recognise an SIS domain in the interval 34–191 (IATALKDGNK…LVEEMVCERS (158 aa)). 49–51 (NGG) lines the substrate pocket. Zn(2+)-binding residues include H58 and E62. Substrate is bound by residues E62, 91 to 92 (ND), 117 to 119 (TTS), S122, and Q169. Residues Q169 and H177 each contribute to the Zn(2+) site.

It belongs to the SIS family. GmhA subfamily. Requires Zn(2+) as cofactor.

The protein localises to the cytoplasm. The enzyme catalyses 2 D-sedoheptulose 7-phosphate = D-glycero-alpha-D-manno-heptose 7-phosphate + D-glycero-beta-D-manno-heptose 7-phosphate. The protein operates within carbohydrate biosynthesis; D-glycero-D-manno-heptose 7-phosphate biosynthesis; D-glycero-alpha-D-manno-heptose 7-phosphate and D-glycero-beta-D-manno-heptose 7-phosphate from sedoheptulose 7-phosphate: step 1/1. Catalyzes the isomerization of sedoheptulose 7-phosphate in D-glycero-D-manno-heptose 7-phosphate. The chain is Phosphoheptose isomerase from Aquifex aeolicus (strain VF5).